A 114-amino-acid polypeptide reads, in one-letter code: Protein yippee-like (114 aa).

Residues 14 to 111 form the Yippee domain; sequence RTYSCVHCRA…IELAHMIKEN (98 aa). Residues C18, C21, C74, and C77 each contribute to the Zn(2+) site.

It belongs to the yippee family.

Functionally, involved in regulating synaptic transmission in presynaptic neurons. In class IV dendritic arborization neurons (nociceptors), involved in regulating activation of their second-order neurons (SONs) and maintaining synaptic contact between nociceptors and their SONs. The sequence is that of Protein yippee-like from Drosophila melanogaster (Fruit fly).